The following is a 349-amino-acid chain: Biotin synthase (349 aa).

The region spanning 60–287 (GDVELATLLS…KARVRLSAGR (228 aa)) is the Radical SAM core domain. C75, C79, and C82 together coordinate [4Fe-4S] cluster. C119, C150, C210, and R282 together coordinate [2Fe-2S] cluster.

Belongs to the radical SAM superfamily. Biotin synthase family. As to quaternary structure, homodimer. [4Fe-4S] cluster serves as cofactor. [2Fe-2S] cluster is required as a cofactor.

It catalyses the reaction (4R,5S)-dethiobiotin + (sulfur carrier)-SH + 2 reduced [2Fe-2S]-[ferredoxin] + 2 S-adenosyl-L-methionine = (sulfur carrier)-H + biotin + 2 5'-deoxyadenosine + 2 L-methionine + 2 oxidized [2Fe-2S]-[ferredoxin]. The protein operates within cofactor biosynthesis; biotin biosynthesis; biotin from 7,8-diaminononanoate: step 2/2. Its function is as follows. Catalyzes the conversion of dethiobiotin (DTB) to biotin by the insertion of a sulfur atom into dethiobiotin via a radical-based mechanism. This is Biotin synthase from Albidiferax ferrireducens (strain ATCC BAA-621 / DSM 15236 / T118) (Rhodoferax ferrireducens).